The chain runs to 285 residues: Putative sugar uptake protein lmo0169 (285 aa).

The next 10 membrane-spanning stretches (helical) occupy residues 5-24 (IALI…SKIG), 31-48 (IIGT…VFIF), 53-71 (YTAT…WSLG), 84-106 (VSKT…GVFA), 116-135 (LVLG…LTSY), 151-173 (IITL…WFDI), 178-195 (AILP…LFSI), 207-226 (WLNM…LLFS), 232-254 (IATG…ILFL), and 263-282 (LILV…MIGI).

The protein belongs to the GRP transporter (TC 2.A.7.5) family.

The protein localises to the cell membrane. This Listeria monocytogenes serovar 1/2a (strain ATCC BAA-679 / EGD-e) protein is Putative sugar uptake protein lmo0169.